Here is a 354-residue protein sequence, read N- to C-terminus: Magnesium-protoporphyrin IX monomethyl ester [oxidative] cyclase (354 aa).

It belongs to the AcsF family. Requires Fe cation as cofactor.

It is found in the plastid. The protein localises to the chloroplast. It catalyses the reaction Mg-protoporphyrin IX 13-monomethyl ester + 3 NADPH + 3 O2 + 2 H(+) = 3,8-divinyl protochlorophyllide a + 3 NADP(+) + 5 H2O. It participates in porphyrin-containing compound metabolism; chlorophyll biosynthesis (light-independent). Its function is as follows. Catalyzes the formation of the isocyclic ring in chlorophyll biosynthesis. Mediates the cyclase reaction, which results in the formation of divinylprotochlorophyllide (Pchlide) characteristic of all chlorophylls from magnesium-protoporphyrin IX 13-monomethyl ester (MgPMME). This Cyanidium caldarium (Red alga) protein is Magnesium-protoporphyrin IX monomethyl ester [oxidative] cyclase.